The chain runs to 284 residues: Hypersensitive-induced response protein 1 (284 aa).

The N-myristoyl glycine moiety is linked to residue Gly2.

Interacts with LRR1.

Its subcellular location is the cell membrane. Its function is as follows. Positive regulator of hypersensitive response (HR)-like cell death. May be involved in potassium ion channel regulation. This Oryza sativa subsp. japonica (Rice) protein is Hypersensitive-induced response protein 1.